Here is a 112-residue protein sequence, read N- to C-terminus: Large ribosomal subunit protein eL33w (112 aa).

Belongs to the eukaryotic ribosomal protein eL33 family.

The protein is Large ribosomal subunit protein eL33w (RPL35AA) of Arabidopsis thaliana (Mouse-ear cress).